A 303-amino-acid chain; its full sequence is N-acetyl-D-glucosamine kinase (303 aa).

Residues 4 to 11 (GFDIGGTK) and 133 to 140 (GVGGGLVL) each bind ATP. Zn(2+) contacts are provided by histidine 157, cysteine 177, cysteine 179, and cysteine 184.

It belongs to the ROK (NagC/XylR) family. NagK subfamily.

It catalyses the reaction N-acetyl-D-glucosamine + ATP = N-acetyl-D-glucosamine 6-phosphate + ADP + H(+). Its pathway is cell wall biogenesis; peptidoglycan recycling. Functionally, catalyzes the phosphorylation of N-acetyl-D-glucosamine (GlcNAc) derived from cell-wall degradation, yielding GlcNAc-6-P. This Citrobacter koseri (strain ATCC BAA-895 / CDC 4225-83 / SGSC4696) protein is N-acetyl-D-glucosamine kinase.